A 474-amino-acid chain; its full sequence is 3-isopropylmalate dehydratase large subunit (474 aa).

[4Fe-4S] cluster is bound by residues Cys-353, Cys-414, and Cys-417.

It belongs to the aconitase/IPM isomerase family. LeuC type 1 subfamily. Heterodimer of LeuC and LeuD. Requires [4Fe-4S] cluster as cofactor.

The enzyme catalyses (2R,3S)-3-isopropylmalate = (2S)-2-isopropylmalate. It participates in amino-acid biosynthesis; L-leucine biosynthesis; L-leucine from 3-methyl-2-oxobutanoate: step 2/4. Catalyzes the isomerization between 2-isopropylmalate and 3-isopropylmalate, via the formation of 2-isopropylmaleate. The chain is 3-isopropylmalate dehydratase large subunit from Pseudomonas paraeruginosa (strain DSM 24068 / PA7) (Pseudomonas aeruginosa (strain PA7)).